We begin with the raw amino-acid sequence, 194 residues long: Orotate phosphoribosyltransferase (194 aa).

117-125 (EDIVSTGLS) contacts 5-phospho-alpha-D-ribose 1-diphosphate. Residues serine 121 and arginine 149 each contribute to the orotate site.

This sequence belongs to the purine/pyrimidine phosphoribosyltransferase family. PyrE subfamily. Homodimer. Mg(2+) serves as cofactor.

The enzyme catalyses orotidine 5'-phosphate + diphosphate = orotate + 5-phospho-alpha-D-ribose 1-diphosphate. Its pathway is pyrimidine metabolism; UMP biosynthesis via de novo pathway; UMP from orotate: step 1/2. Catalyzes the transfer of a ribosyl phosphate group from 5-phosphoribose 1-diphosphate to orotate, leading to the formation of orotidine monophosphate (OMP). The chain is Orotate phosphoribosyltransferase from Maricaulis maris (strain MCS10) (Caulobacter maris).